The chain runs to 219 residues: Protein Ac132 (219 aa).

The interval 1-34 is disordered; that stretch reads MSDKTPTKKGGSHAMTLRERGVTKPPKKSEKLQQ. Residues 16–33 are compositionally biased toward basic and acidic residues; it reads TLRERGVTKPPKKSEKLQ. An NEBU-like domain region spans residues 103–134; it reads YPMAYFVNTDYKLKLECARIRSDLLYKNKNEV.

As to quaternary structure, interacts with viral envelope protein E18 and the DNA-binding protein p6.9.

The protein localises to the host cytoplasm. Its subcellular location is the host nucleus. The protein resides in the virion. Its function is as follows. Plays an essential role in nucleocapsid entry in host nucleus. May act by binding and stabilizing F-actin in the infected cell, which might attach to nucleocapsids and then push the nucleocapsids into the nucleus. This is Protein Ac132 (Ac132) from Autographa californica nuclear polyhedrosis virus (AcMNPV).